We begin with the raw amino-acid sequence, 107 residues long: Integration host factor subunit alpha (107 aa).

It belongs to the bacterial histone-like protein family. As to quaternary structure, heterodimer of an alpha and a beta chain.

Functionally, this protein is one of the two subunits of integration host factor, a specific DNA-binding protein that functions in genetic recombination as well as in transcriptional and translational control. This Brucella suis (strain ATCC 23445 / NCTC 10510) protein is Integration host factor subunit alpha.